Reading from the N-terminus, the 244-residue chain is Isoprenyl transferase (244 aa).

Residue Asp-23 is part of the active site. A Mg(2+)-binding site is contributed by Asp-23. Substrate contacts are provided by residues 24–27 (GNGR), Trp-28, Arg-36, His-40, and 68–70 (STE). Asn-71 serves as the catalytic Proton acceptor. Substrate is bound by residues Trp-72, Arg-74, Arg-191, and 197–199 (RMS). Glu-210 provides a ligand contact to Mg(2+).

This sequence belongs to the UPP synthase family. In terms of assembly, homodimer. The cofactor is Mg(2+).

Its function is as follows. Catalyzes the condensation of isopentenyl diphosphate (IPP) with allylic pyrophosphates generating different type of terpenoids. The chain is Isoprenyl transferase from Lactococcus lactis subsp. lactis (strain IL1403) (Streptococcus lactis).